A 549-amino-acid chain; its full sequence is Teichoic acids export ATP-binding protein TagH (549 aa).

One can recognise an ABC transporter domain in the interval 22–243 (DKLKDLFRKQ…YRAFLKEYNQ (222 aa)). 57 to 64 (GLNGSGKS) serves as a coordination point for ATP. Residues 244-549 (MSMEDRKKFQ…EIQSISIVKK (306 aa)) are unknown. One can recognise an SH3b domain in the interval 346-415 (ENMYMVKSNG…VSTKFIEPFK (70 aa)).

This sequence belongs to the ABC transporter superfamily. Teichoic acids exporter (TC 3.A.1.104.1) family. As to quaternary structure, the complex is composed of two ATP-binding proteins (TagH) and two transmembrane proteins (TagG).

The protein resides in the cell membrane. It carries out the reaction ATP + H2O + teichoic acidSide 1 = ADP + phosphate + teichoic acidSide 2.. Part of the ABC transporter complex TagGH involved in teichoic acids export. Responsible for energy coupling to the transport system. In Bacillus cereus (strain ZK / E33L), this protein is Teichoic acids export ATP-binding protein TagH.